The sequence spans 682 residues: Potassium-transporting ATPase ATP-binding subunit (682 aa).

The next 4 membrane-spanning stretches (helical) occupy residues 34 to 54, 62 to 82, 219 to 239, and 254 to 274; these read PVMFIVWIGSLLTTCISIAMA, ALFSAAISGWLWITVLFANFA, IALTILLIALTIVFLLATATL, and VLVALLVCLIPTTIGGLLSAI. The active-site 4-aspartylphosphate intermediate is the aspartate 307. ATP is bound by residues aspartate 344, glutamate 348, 377 to 384, and lysine 395; that span reads FTAQSRMS. 2 residues coordinate Mg(2+): aspartate 518 and aspartate 522. The next 3 membrane-spanning stretches (helical) occupy residues 588–608, 616–636, and 656–676; these read FAIIPAAFAATYPQLNALNIM, AILSAVIFNALIIVFLIPLAL, and IYGLGGLLVPFIGIKVIDLLL.

This sequence belongs to the cation transport ATPase (P-type) (TC 3.A.3) family. Type IA subfamily. In terms of assembly, the system is composed of three essential subunits: KdpA, KdpB and KdpC.

The protein resides in the cell inner membrane. The enzyme catalyses K(+)(out) + ATP + H2O = K(+)(in) + ADP + phosphate + H(+). Functionally, part of the high-affinity ATP-driven potassium transport (or Kdp) system, which catalyzes the hydrolysis of ATP coupled with the electrogenic transport of potassium into the cytoplasm. This subunit is responsible for energy coupling to the transport system and for the release of the potassium ions to the cytoplasm. The polypeptide is Potassium-transporting ATPase ATP-binding subunit (Escherichia coli (strain K12 / MC4100 / BW2952)).